The primary structure comprises 332 residues: Beta-ketoacyl-[acyl-carrier-protein] synthase III 5 (332 aa).

Catalysis depends on residues Cys-111 and His-253. The ACP-binding stretch occupies residues 254–258; the sequence is QANAR. Asn-283 is an active-site residue.

Belongs to the thiolase-like superfamily. FabH family. In terms of assembly, homodimer.

Its subcellular location is the cytoplasm. The catalysed reaction is malonyl-[ACP] + acetyl-CoA + H(+) = 3-oxobutanoyl-[ACP] + CO2 + CoA. The protein operates within lipid metabolism; fatty acid biosynthesis. Its function is as follows. Catalyzes the condensation reaction of fatty acid synthesis by the addition to an acyl acceptor of two carbons from malonyl-ACP. Catalyzes the first condensation reaction which initiates fatty acid synthesis and may therefore play a role in governing the total rate of fatty acid production. Possesses both acetoacetyl-ACP synthase and acetyl transacylase activities. Its substrate specificity determines the biosynthesis of branched-chain and/or straight-chain of fatty acids. The sequence is that of Beta-ketoacyl-[acyl-carrier-protein] synthase III 5 from Streptomyces coelicolor (strain ATCC BAA-471 / A3(2) / M145).